Reading from the N-terminus, the 41-residue chain is Large ribosomal subunit protein bL36 (41 aa).

Belongs to the bacterial ribosomal protein bL36 family.

This chain is Large ribosomal subunit protein bL36, found in Mesorhizobium japonicum (strain LMG 29417 / CECT 9101 / MAFF 303099) (Mesorhizobium loti (strain MAFF 303099)).